Consider the following 122-residue polypeptide: Large ribosomal subunit protein bL17 (122 aa).

It belongs to the bacterial ribosomal protein bL17 family. As to quaternary structure, part of the 50S ribosomal subunit. Contacts protein L32.

The protein is Large ribosomal subunit protein bL17 of Neisseria meningitidis serogroup C / serotype 2a (strain ATCC 700532 / DSM 15464 / FAM18).